The primary structure comprises 670 residues: Solute carrier organic anion transporter family member 1A2 (670 aa).

Residues 1–20 (MGETEKRIETHRIRCLSKLK) lie on the Cytoplasmic side of the membrane. A helical transmembrane segment spans residues 21–40 (MFLLAITCAFVSKTLSGSYM). The Extracellular segment spans residues 41–59 (NSMLTQIERQFNIPTSLVG). A helical transmembrane segment spans residues 60 to 80 (FINGSFEIGNLLLIIFVSYFG). Over 81–86 (TKLHRP) the chain is Cytoplasmic. A helical membrane pass occupies residues 87 to 111 (IMIGIGCVVMGLGCFLKSLPHFLMN). The Extracellular portion of the chain corresponds to 112 to 155 (QYEYESTVSVSGNLSSNSFLCMENGTQILRPTQDPSECTKEVKS). 2 N-linked (GlcNAc...) asparagine glycosylation sites follow: Asn-124 and Asn-135. Residues 156 to 184 (LMWVYVLVGNIVRGMGETPILPLGISYIE) form a helical membrane-spanning segment. Residues 185-203 (DFAKFENSPLYIGLVETGA) are Cytoplasmic-facing. Residues 204 to 224 (IIGPLIGLLLASFCANVYVDT) form a helical membrane-spanning segment. Residues 225–242 (GFVNTDDLIITPTDTRWV) lie on the Extracellular side of the membrane. The helical transmembrane segment at 243–267 (GAWWFGFLICAGVNVLTAIPFFFLP) threads the bilayer. Topologically, residues 268–311 (NTLPKEGLETNADIIKNENEDKQKEEVKKEKYGITKDFLPFMKS) are cytoplasmic. A helical membrane pass occupies residues 312 to 333 (LSCNPIYMLFILVSVIQFNAFV). The Extracellular portion of the chain corresponds to 334-353 (NMISFMPKYLEQQYGISSSD). The chain crosses the membrane as a helical span at residues 354–377 (AIFLMGIYNLPPICIGYIIGGLIM). The Cytoplasmic portion of the chain corresponds to 378 to 381 (KKFK). Residues 382 to 405 (ITVKQAAHIGCWLSLLEYLLYFLS) traverse the membrane as a helical segment. Residues 406-513 (FLMTCENSSV…PDCSLMLQYF (108 aa)) are Extracellular-facing. 2 N-linked (GlcNAc...) asparagine glycosylation sites follow: Asn-412 and Asn-419. Positions 433–488 (NDIFADCNVDCNCPSKIWDPVCGNNGLSYLSACLAGCETSIGTGINMVFQNCSCIQ) constitute a Kazal-like domain. 3 cysteine pairs are disulfide-bonded: Cys-439/Cys-469, Cys-445/Cys-465, and Cys-454/Cys-486. A helical membrane pass occupies residues 514–536 (LILSAMSSFIYSLAAIPGYMVLL). Topologically, residues 537–545 (RCMKSEEKS) are cytoplasmic. The helical transmembrane segment at 546–571 (LGVGLHTFCTRVFAGIPAPIYFGALM) threads the bilayer. Residues 572–605 (DSTCLHWGTLKCGESGACRIYDSTTFRYIYLGLP) are Extracellular-facing. A helical transmembrane segment spans residues 606–623 (AALRGSSFVPALIILILL). Residues 624-670 (RKCHLPGENASSGTELIETKVKGKENECKDIYQKSTVLKDDELKTKL) lie on the Cytoplasmic side of the membrane.

It belongs to the organo anion transporter (TC 2.A.60) family. As to expression, higher expression in the brain than in liver and kidney. Expressed in brain neurons in both cortex and hippocampus. Expressed in placental trophoblasts. Also expressed in lung and testes at lower levels. Expressed in the eye (at protein level). Expressed in the retina in the outer and inner nuclear layers, the inner plexiform layer and the ganglion cell layer. Expressed in liver and prostate. In testis, primarily localized to the basal membrane of Sertoli cells and weakly expressed in Leydig cells and within the tubules. Expressed in fetal brain and liver.

The protein resides in the cell membrane. It localises to the basal cell membrane. It catalyses the reaction taurocholate(out) = taurocholate(in). It carries out the reaction glycocholate(out) = glycocholate(in). The enzyme catalyses taurochenodeoxycholate(out) = taurochenodeoxycholate(in). The catalysed reaction is tauroursodeoxycholate(out) = tauroursodeoxycholate(in). It catalyses the reaction dehydroepiandrosterone 3-sulfate(out) = dehydroepiandrosterone 3-sulfate(in). It carries out the reaction estrone 3-sulfate(out) = estrone 3-sulfate(in). The enzyme catalyses 3,3',5'-triiodo-L-thyronine(out) = 3,3',5'-triiodo-L-thyronine(in). The catalysed reaction is L-thyroxine(out) = L-thyroxine(in). It catalyses the reaction taurodeoxycholate(out) = taurodeoxycholate(in). It carries out the reaction glycodeoxycholate(out) = glycodeoxycholate(in). The enzyme catalyses glycochenodeoxycholate(out) = glycochenodeoxycholate(in). The catalysed reaction is glycoursodeoxycholate(out) = glycoursodeoxycholate(in). It catalyses the reaction 17beta-estradiol 17-O-(beta-D-glucuronate)(out) = 17beta-estradiol 17-O-(beta-D-glucuronate)(in). It carries out the reaction prostaglandin E2(out) = prostaglandin E2(in). The enzyme catalyses substance P(out) = substance P(in). Its activity is regulated as follows. Transport activity is inhibited by the grapefruit juice component naringin. Functionally, na(+)-independent transporter that mediates the cellular uptake of a broad range of organic anions such as the endogenous bile salts cholate and deoxycholate, either in their unconjugated or conjugated forms (taurocholate and glycocholate), at the plasmam membrane. Responsible for intestinal absorption of bile acids. Transports dehydroepiandrosterone 3-sulfate (DHEAS), a major circulating steroid secreted by the adrenal cortex, as well as estrone 3-sulfate and 17beta-estradiol 17-O-(beta-D-glucuronate). Mediates apical uptake of all-trans-retinol (atROL) across human retinal pigment epithelium, which is essential to maintaining the integrity of the visual cycle and thus vision. Involved in the uptake of clinically used drugs. Capable of thyroid hormone transport (both T3 or 3,3',5'-triiodo-L-thyronine, and T4 or L-tyroxine). Also transports prostaglandin E2. Plays roles in blood-brain and -cerebrospinal fluid barrier transport of organic anions and signal mediators, and in hormone uptake by neural cells. May also play a role in the reuptake of neuropeptides such as substance P/TAC1 and vasoactive intestinal peptide/VIP released from retinal neurons. May play an important role in plasma and tissue distribution of the structurally diverse chemotherapeutic drugs methotrexate and paclitaxel. Shows a pH-sensitive substrate specificity which may be ascribed to the protonation state of the binding site and leads to a stimulation of substrate transport in an acidic microenvironment. Hydrogencarbonate/HCO3(-) acts as the probable counteranion that exchanges for organic anions. May contribute to regulate the transport of organic compounds in testis across the blood-testis-barrier. This is Solute carrier organic anion transporter family member 1A2 (SLCO1A2) from Homo sapiens (Human).